A 403-amino-acid polypeptide reads, in one-letter code: Probable tRNA sulfurtransferase (403 aa).

The 106-residue stretch at 60-165 folds into the THUMP domain; the sequence is QLVEERLKPI…KEGVFLSCRT (106 aa). Residues 183–184, 208–209, R265, G287, and Q296 each bind ATP; these read ML and HF.

The protein belongs to the ThiI family.

The protein resides in the cytoplasm. The catalysed reaction is [ThiI sulfur-carrier protein]-S-sulfanyl-L-cysteine + a uridine in tRNA + 2 reduced [2Fe-2S]-[ferredoxin] + ATP + H(+) = [ThiI sulfur-carrier protein]-L-cysteine + a 4-thiouridine in tRNA + 2 oxidized [2Fe-2S]-[ferredoxin] + AMP + diphosphate. It catalyses the reaction [ThiS sulfur-carrier protein]-C-terminal Gly-Gly-AMP + S-sulfanyl-L-cysteinyl-[cysteine desulfurase] + AH2 = [ThiS sulfur-carrier protein]-C-terminal-Gly-aminoethanethioate + L-cysteinyl-[cysteine desulfurase] + A + AMP + 2 H(+). The protein operates within cofactor biosynthesis; thiamine diphosphate biosynthesis. In terms of biological role, catalyzes the ATP-dependent transfer of a sulfur to tRNA to produce 4-thiouridine in position 8 of tRNAs, which functions as a near-UV photosensor. Also catalyzes the transfer of sulfur to the sulfur carrier protein ThiS, forming ThiS-thiocarboxylate. This is a step in the synthesis of thiazole, in the thiamine biosynthesis pathway. The sulfur is donated as persulfide by IscS. This Listeria monocytogenes serotype 4b (strain CLIP80459) protein is Probable tRNA sulfurtransferase.